The sequence spans 185 residues: Peptidyl-tRNA hydrolase (185 aa).

Tyr14 contacts tRNA. His19 functions as the Proton acceptor in the catalytic mechanism. Tyr65, Asn67, and Asn113 together coordinate tRNA.

It belongs to the PTH family. Monomer.

The protein resides in the cytoplasm. It catalyses the reaction an N-acyl-L-alpha-aminoacyl-tRNA + H2O = an N-acyl-L-amino acid + a tRNA + H(+). Its function is as follows. Hydrolyzes ribosome-free peptidyl-tRNAs (with 1 or more amino acids incorporated), which drop off the ribosome during protein synthesis, or as a result of ribosome stalling. In terms of biological role, catalyzes the release of premature peptidyl moieties from peptidyl-tRNA molecules trapped in stalled 50S ribosomal subunits, and thus maintains levels of free tRNAs and 50S ribosomes. The protein is Peptidyl-tRNA hydrolase of Rickettsia bellii (strain RML369-C).